We begin with the raw amino-acid sequence, 535 residues long: Sterol 26-hydroxylase, mitochondrial (535 aa).

A mitochondrion-targeting transit peptide spans 1 to 36 (MAALGCARLRWALLGPRVAGCGLCPQGARAKAAIPT). Lys-286 carries the N6-acetyllysine modification. The segment at 387–401 (PLLKAVLKETLRLYP) is sterol-binding. Cys-480 contributes to the heme binding site. The residue at position 524 (Lys-524) is an N6-acetyllysine.

This sequence belongs to the cytochrome P450 family. In terms of assembly, interacts with HSP70; this interaction is required for initial targeting to mitochondria. Heme serves as cofactor. In terms of tissue distribution, expressed in all tissues tested. Highest expression in liver and duodenum, followed by adrenal gland and lung. Low expression in kidney and spleen.

It is found in the mitochondrion inner membrane. The catalysed reaction is 5beta-cholestane-3alpha,7alpha,12alpha-triol + 6 reduced [adrenodoxin] + 3 O2 + 5 H(+) = (25R)-3alpha,7alpha,12alpha-trihydroxy-5beta-cholestan-26-oate + 6 oxidized [adrenodoxin] + 4 H2O. It catalyses the reaction cholestanol + 2 reduced [adrenodoxin] + O2 + 2 H(+) = (25R)-26-hydroxycholestanol + 2 oxidized [adrenodoxin] + H2O. The enzyme catalyses (25R)-3beta-hydroxycholest-5-en-7-one-26-al + 2 reduced [adrenodoxin] + O2 + H(+) = (25R)-3beta-hydroxycholest-5-en-7-one-26-oate + 2 oxidized [adrenodoxin] + H2O. It carries out the reaction (25R)-3beta,26-dihydroxycholest-5-en-7-one + 2 reduced [adrenodoxin] + O2 + 2 H(+) = (25R)-3beta-hydroxycholest-5-en-7-one-26-al + 2 oxidized [adrenodoxin] + 2 H2O. The catalysed reaction is 7-oxocholesterol + 2 reduced [adrenodoxin] + O2 + 2 H(+) = (25R)-3beta,26-dihydroxycholest-5-en-7-one + 2 oxidized [adrenodoxin] + H2O. It catalyses the reaction calciol + 2 reduced [adrenodoxin] + O2 + 2 H(+) = calcidiol + 2 oxidized [adrenodoxin] + H2O. The enzyme catalyses (25R)-5beta-cholestane-3alpha,7alpha,12alpha,26-tetrol + 2 reduced [adrenodoxin] + O2 + 2 H(+) = (25R)-3alpha,7alpha,12alpha-trihydroxy-5beta-cholestan-26-al + 2 oxidized [adrenodoxin] + 2 H2O. It carries out the reaction 2 reduced [adrenodoxin] + cholesterol + O2 + 2 H(+) = (25R)-cholest-5-ene-3beta,26-diol + 2 oxidized [adrenodoxin] + H2O. The catalysed reaction is (25R)-3beta,4beta-dihydroxycholest-5-en-26-al + 2 reduced [adrenodoxin] + O2 + H(+) = (25R)-3beta,4beta-dihydroxycholest-5-en-26-oate + 2 oxidized [adrenodoxin] + H2O. It catalyses the reaction (25R)-4beta,26-dihydroxycholesterol + 2 reduced [adrenodoxin] + O2 + 2 H(+) = (25R)-3beta,4beta-dihydroxycholest-5-en-26-al + 2 oxidized [adrenodoxin] + 2 H2O. The enzyme catalyses 4beta-hydroxycholesterol + 2 reduced [adrenodoxin] + O2 + 2 H(+) = (25R)-4beta,26-dihydroxycholesterol + 2 oxidized [adrenodoxin] + H2O. It carries out the reaction (25R)-3beta-hydroxy-5-cholesten-26-al + 2 reduced [adrenodoxin] + O2 + H(+) = (25R)-3beta-hydroxy-5-cholestenoate + 2 oxidized [adrenodoxin] + H2O. The catalysed reaction is (25R)-cholest-5-ene-3beta,26-diol + 2 reduced [adrenodoxin] + O2 + 2 H(+) = (25R)-3beta-hydroxy-5-cholesten-26-al + 2 oxidized [adrenodoxin] + 2 H2O. It catalyses the reaction (25R)-3alpha,7alpha,12alpha-trihydroxy-5beta-cholestan-26-al + 2 reduced [adrenodoxin] + O2 + H(+) = (25R)-3alpha,7alpha,12alpha-trihydroxy-5beta-cholestan-26-oate + 2 oxidized [adrenodoxin] + H2O. The enzyme catalyses 5beta-cholestane-3alpha,7alpha,12alpha-triol + 2 reduced [adrenodoxin] + O2 + 2 H(+) = (25R)-5beta-cholestane-3alpha,7alpha,12alpha,26-tetrol + 2 oxidized [adrenodoxin] + H2O. The protein operates within hormone biosynthesis; cholecalciferol biosynthesis. It participates in steroid metabolism; cholesterol degradation. It functions in the pathway lipid metabolism; bile acid biosynthesis. In terms of biological role, cytochrome P450 monooxygenase that catalyzes regio- and stereospecific hydroxylation of cholesterol and its derivatives. Hydroxylates (with R stereochemistry) the terminal methyl group of cholesterol side-chain in a three step reaction to yield at first a C26 alcohol, then a C26 aldehyde and finally a C26 acid. Regulates cholesterol homeostasis by catalyzing the conversion of excess cholesterol to bile acids via both the 'neutral' (classic) and the 'acid' (alternative) pathways. May also regulate cholesterol homeostasis via generation of active oxysterols, which act as ligands for NR1H2 and NR1H3 nuclear receptors, modulating the transcription of genes involved in lipid metabolism. Plays a role in cholestanol metabolism in the cerebellum. Similarly to cholesterol, hydroxylates cholestanol and may facilitate sterol diffusion through the blood-brain barrier to the systemic circulation for further degradation. Also hydroxylates retinal 7-ketocholesterol, a noxious oxysterol with pro-inflammatory and pro-apoptotic effects, and may play a role in its elimination from the retinal pigment epithelium. May play a redundant role in vitamin D biosynthesis. Catalyzes 25-hydroxylation of vitamin D3 that is required for its conversion to a functionally active form. The protein is Sterol 26-hydroxylase, mitochondrial (CYP27A1) of Oryctolagus cuniculus (Rabbit).